We begin with the raw amino-acid sequence, 297 residues long: NAC domain-containing protein 72 (297 aa).

The 149-residue stretch at 14–162 folds into the NAC domain; it reads LPPGFRFYPT…DWVLCRIYKK (149 aa). Residues 111 to 168 mediate DNA binding; that stretch reads VGIKKALVFYAGKAPKGTKTNWIMHEYRLIEHSRSHGSSKLDDWVLCRIYKKTSGSQR. Disordered regions lie at residues 168-195 and 259-278; these read RQAV…SQLD and GEAE…LTQS. Positions 266-277 are enriched in polar residues; it reads VNRQQNSSGLTQ.

Expressed in leaves and in root pericycle and epidermis.

It localises to the nucleus. Its function is as follows. Transcription factors that bind specifically to the 5'-CATGTG-3' motif and with bipartite regions with 5'-CGTr-3' and 5'-YACG-3' as cores. Involved in the regulation of metabolic reprogramming during senescence by promoting the chloroplast protein degradation and the catabolism of lysine, phytol and free fatty acids via the induction of CV, LKR/SDH and PES1 expression. Also triggers the degradation of starch and the accumulation of mono- and disaccharides during senescence by enhancing the expression of AMY1, SFP1 and SWEET15. The chain is NAC domain-containing protein 72 from Arabidopsis thaliana (Mouse-ear cress).